The primary structure comprises 668 residues: Biosynthetic arginine decarboxylase (668 aa).

Lysine 105 is modified (N6-(pyridoxal phosphate)lysine). Substrate is bound at residue 286–296 (LDVGGGLGVDY).

The protein belongs to the Orn/Lys/Arg decarboxylase class-II family. SpeA subfamily. Mg(2+) serves as cofactor. Pyridoxal 5'-phosphate is required as a cofactor.

The enzyme catalyses L-arginine + H(+) = agmatine + CO2. Functionally, catalyzes the biosynthesis of agmatine from arginine. This is Biosynthetic arginine decarboxylase from Rhodopirellula baltica (strain DSM 10527 / NCIMB 13988 / SH1).